A 272-amino-acid polypeptide reads, in one-letter code: Large ribosomal subunit protein uL2 (272 aa).

The disordered stretch occupies residues 222 to 272 (GTAMNPVDHPHGGGEGRNFGKHPVSPWGKKTKGKKTRNNRLTDKFIVHRRS). Residues 250-259 (KKTKGKKTRN) are compositionally biased toward basic residues. The span at 261–272 (RLTDKFIVHRRS) shows a compositional bias: basic and acidic residues.

Belongs to the universal ribosomal protein uL2 family. As to quaternary structure, part of the 50S ribosomal subunit. Forms a bridge to the 30S subunit in the 70S ribosome.

Its function is as follows. One of the primary rRNA binding proteins. Required for association of the 30S and 50S subunits to form the 70S ribosome, for tRNA binding and peptide bond formation. It has been suggested to have peptidyltransferase activity; this is somewhat controversial. Makes several contacts with the 16S rRNA in the 70S ribosome. The chain is Large ribosomal subunit protein uL2 from Baumannia cicadellinicola subsp. Homalodisca coagulata.